We begin with the raw amino-acid sequence, 215 residues long: Rac-like GTP-binding protein ARAC10 (215 aa).

GTP is bound at residue 15 to 22 (GDGAVGKT). The short motif at 37-45 (YIPTVFDNF) is the Effector region element. Residues 62–66 (DTAGQ) and 120–123 (TKLD) each bind GTP. S-palmitoyl cysteine attachment occurs at residues Cys202 and Cys208.

It belongs to the small GTPase superfamily. Rho family. Component of the active ARAC10-IRC5-KIN13A complex. Interacts with ICR5.

It is found in the membrane. Its subcellular location is the cytoplasm. It localises to the cytoskeleton. In terms of biological role, involved in local disassembly of cortical microtubules when associated with ICR5 and KIN13A. In Arabidopsis thaliana (Mouse-ear cress), this protein is Rac-like GTP-binding protein ARAC10 (ARAC10).